A 229-amino-acid polypeptide reads, in one-letter code: Endo-1,4-beta-xylanase 1 (229 aa).

The first 19 residues, 1–19, serve as a signal peptide directing secretion; that stretch reads MVAFSSLICALTSIASTLA. Positions 20–51 are excised as a propeptide; sequence MPTGLEPESSVNVTERGMYDFVLGAHNDHRRR. Asparagine 31 carries N-linked (GlcNAc...) asparagine glycosylation. The 187-residue stretch at 42–228 folds into the GH11 domain; sequence LGAHNDHRRR…GSGSASQSVS (187 aa). Tyrosine 117 is a binding site for substrate. Glutamate 126 (nucleophile) is an active-site residue. Residues tyrosine 128, arginine 160, proline 164, glutamine 174, and tyrosine 209 each coordinate substrate. Glutamate 215 serves as the catalytic Proton donor.

Belongs to the glycosyl hydrolase 11 (cellulase G) family.

It is found in the secreted. The enzyme catalyses Endohydrolysis of (1-&gt;4)-beta-D-xylosidic linkages in xylans.. It functions in the pathway glycan degradation; xylan degradation. Functionally, glycoside hydrolase involved in the hydrolysis of xylan, a major plant cell wall hemicellulose made up of 1,4-beta-linked D-xylopyranose residues. Catalyzes the endohydrolysis of the main-chain 1,4-beta-glycosidic bonds connecting the xylose subunits yielding various xylooligosaccharides and xylose. This is Endo-1,4-beta-xylanase 1 from Hypocrea jecorina (strain QM6a) (Trichoderma reesei).